The following is a 617-amino-acid chain: Regulatory solute carrier protein family 1 member 1 (617 aa).

Over residues 1–22 (MSSLPTSDGFNHPARSSGQSPD) the composition is skewed to polar residues. 3 disordered regions span residues 1–106 (MSSL…EITV), 155–181 (ENQNLSQVSDPQQHEEPGNEQYEVAQQ), and 217–237 (KGNGLPQNVDPPSAKKSIPSS). 2 stretches are compositionally biased toward basic and acidic residues: residues 43 to 52 (SDSDRIEPKA) and 66 to 83 (SEKKEHLSLQDLSDHASS). Polar residues-rich tracts occupy residues 89 to 103 (TDQSPAMPMQNSSEE) and 155 to 165 (ENQNLSQVSDP). The segment at 410 to 412 (QCP) is involved in post-transcriptional down-regulation of SLC5A1. Residues 571–611 (IFPATDIDRILRAGFTLQEALGALHRVGGNADLALLVLLAK) enclose the UBA domain.

As to quaternary structure, interacts with YRDC. Expressed in small intestine, kidney and brain.

The protein resides in the cell membrane. It is found in the nucleus. The protein localises to the golgi apparatus. It localises to the trans-Golgi network. Functionally, mediates transcriptional and post-transcriptional regulation of SLC5A1. Inhibits a dynamin and PKC-dependent exocytotic pathway of SLC5A1. Also involved in transcriptional regulation of SLC22A2. Exhibits glucose-dependent, short-term inhibition of SLC5A1 and SLC22A2 by inhibiting the release of vesicles from the trans-Golgi network. This chain is Regulatory solute carrier protein family 1 member 1 (RSC1A1), found in Homo sapiens (Human).